Here is a 321-residue protein sequence, read N- to C-terminus: Glucokinase (321 aa).

Position 8–13 (8–13) interacts with ATP; that stretch reads GDVGGT.

It belongs to the bacterial glucokinase family.

The protein resides in the cytoplasm. It catalyses the reaction D-glucose + ATP = D-glucose 6-phosphate + ADP + H(+). The protein is Glucokinase of Pectobacterium atrosepticum (strain SCRI 1043 / ATCC BAA-672) (Erwinia carotovora subsp. atroseptica).